Reading from the N-terminus, the 614-residue chain is MIKKYWFLMVYSVTAFSVWAQDTPLDTLVVTANRFQEPLSTVLAPVTIVTREDIDRWQVSSVNDVLRRLPGVAISQHGGEGQLSTIFVRGTNSNHTLVLIDGVRLNLAGVSGAADLSQFPVALVQRIEYIRGPRSAIYGSDAIGGVINIITSRENTGTEISAGWGSNSYQHYDISTHQQLGENTRVTLLGDYTYTRGFDAVAYGSTGMQPQSDRDGFLSKTFYGKLEHNLSDTWSGFVRGYGYNNRTKYDAWYSPGSPLIDTRKLYSQSWDAGLRYAGETLQSQLVSSYSHSKDYNYDPHYGRYDTSANLDDMKQYNLQWTNSVTVGHGNVGAGIDWQKQSTTPGTGYLPKGYDQRNTGIYLTGLQKLGDFTLEGAVRNDDNSQFERHTTWQSSAGWEFIEGYRFIASYGTAFKAPNLGQLYGMYGNPNLAPEKSKQWEGAFEGLTGGVNWRISGYRNDISEMINYNPHTLRYYNDGKVHVKGIEATVNFDTGALTHTVSYDYTDARNALTDKPLERRPKLQVKYQLDWQVFDFDWGITYQYMGSRYDSDYSSWPYKSVKMGGVSLWDVAVAYPVTPHLIVRGKIANLFNKDYETGYGYQAAGREYILSGSYTF.

The signal sequence occupies residues 1-20 (MIKKYWFLMVYSVTAFSVWA). Positions 26–33 (DTLVVTAN) match the TonB box motif. In terms of domain architecture, TBDR plug spans 38-152 (PLSTVLAPVT…IGGVINIITS (115 aa)). Cyanocob(III)alamin contacts are provided by residues Leu83, Thr85, Asn92, and 110–111 (VS). A TBDR beta-barrel domain is found at 155 to 614 (NTGTEISAGW…EYILSGSYTF (460 aa)). 3 consecutive transmembrane segments (beta stranded) span residues 158–165 (TEISAGWG), 169–178 (YQHYDISTHQ), and 184–195 (TRVTLLGDYTYT). Ca(2+)-binding residues include Asp199, Gln211, Asp213, and Asp215. A run of 2 beta stranded transmembrane segments spans residues 217–227 (FLSKTFYGKLE) and 232–248 (DTWS…NRTK). Positions 249 and 250 each coordinate Ca(2+). Ala251 provides a ligand contact to cyanocob(III)alamin. Asp261 contacts Ca(2+). 14 beta stranded membrane-spanning segments follow: residues 263–277 (RKLY…LRYA), 279–296 (ETLQ…KDYN), 309–325 (NLDD…NSVT), 328–337 (HGNVGAGIDW), 353–369 (YDQR…QKLG), 371–381 (FTLEGAVRNDD), 385–400 (FERH…WEFI), 403–417 (YRFI…KAPN), 434–443 (KSKQWEGAFE), 449–458 (VNWRISGYRN), 473–490 (YYND…TVNF), 494–509 (ALTH…ARNA), 517–529 (RRPK…QLDW), and 535–550 (DWGI…YDSD). Residue Arg517 coordinates cyanocob(III)alamin. Tyr551 provides a ligand contact to cyanocob(III)alamin. The next 3 membrane-spanning stretches (beta stranded) occupy residues 558–572 (SVKM…VAVA), 585–596 (IANLFNKDYETG), and 602–614 (AGRE…SYTF). Positions 597 to 614 (YGYQAAGREYILSGSYTF) match the TonB C-terminal box motif.

Belongs to the TonB-dependent receptor family. BtuB (TC 1.B.14.3.1) subfamily.

Its subcellular location is the cell outer membrane. Involved in the active translocation of vitamin B12 (cyanocobalamin) across the outer membrane to the periplasmic space. It derives its energy for transport by interacting with the trans-periplasmic membrane protein TonB. The polypeptide is Vitamin B12 transporter BtuB (btuB) (Escherichia coli).